The chain runs to 212 residues: F-box protein GID2 (212 aa).

Residues 1-74 (MKFRSDSSGG…AGEGEQPRVP (74 aa)) are disordered. The span at 35-59 (DPSSSSSQGEASSSSQPPPQQQQEE) shows a compositional bias: low complexity. In terms of domain architecture, F-box spans 70–116 (QPRVPDLGEDLVFEVLRRAEARTLAAAACVSRGWRQLAEDERLWEAA).

Part of some SCF(GID2) complex, which consist of a SKP1 protein, CUL1, GID2 and some RING box protein. Interacts directly with SKP2 and SKP15. Interacts directly with DELLA protein SLR1. May have a higher affinity for phosphorylated SLR1 proteins. Widely expressed. Preferentially expressed in unopened flowers, shoot apices and elongation stem. Expressed at lower level in the leaf blades, leaf sheaths, roots and rachis.

The protein resides in the nucleus. Its pathway is protein modification; protein ubiquitination. Functionally, essential component of some SCF-type E3 ligase complex that positively regulates the gibberellin signaling pathway. Upon gibberellin treatment, the complex mediates the ubiquitination and subsequent degradation of DELLA protein SLR1, a repressor of the gibberellin pathway, leading to activate the pathway. The polypeptide is F-box protein GID2 (GID2) (Oryza sativa subsp. japonica (Rice)).